Here is a 417-residue protein sequence, read N- to C-terminus: MAP kinase-interacting serine/threonine-protein kinase 1 (417 aa).

The tract at residues 1-20 (MVSSQPVPIDDGGKRRKKKR) is disordered. The Protein kinase domain occupies 37 to 321 (RLTDELLGEG…AAQVLQHPWL (285 aa)). ATP is bound by residues 43-51 (LGEGAYAKV) and lysine 66. Catalysis depends on aspartate 158, which acts as the Proton acceptor. Positions 397–417 (AHARKGGSHLTHTTVTSQGAT) are disordered. Positions 406–417 (LTHTTVTSQGAT) are enriched in polar residues.

The protein belongs to the protein kinase superfamily. CAMK Ser/Thr protein kinase family. Mg(2+) is required as a cofactor.

It carries out the reaction L-seryl-[protein] + ATP = O-phospho-L-seryl-[protein] + ADP + H(+). It catalyses the reaction L-threonyl-[protein] + ATP = O-phospho-L-threonyl-[protein] + ADP + H(+). May play a role in the response to environmental stress and cytokines. Appears to regulate translation by phosphorylating EIF4E, thus increasing the affinity of this protein for the 7-methylguanosine-containing mRNA cap. This Xenopus tropicalis (Western clawed frog) protein is MAP kinase-interacting serine/threonine-protein kinase 1 (mknk1).